A 405-amino-acid polypeptide reads, in one-letter code: Secreted aspartic protease 8 (405 aa).

An N-terminal signal peptide occupies residues 1–25 (MVSIITFTKNVLVTLAFALLAQGLA). The N-linked (GlcNAc...) asparagine glycan is linked to asparagine 50. Residues 52 to 78 (TAHGQHHQSQQQQQQQQQQPAQKRGTV) form a disordered region. Residues 58 to 70 (HQSQQQQQQQQQQ) show a composition bias toward low complexity. In terms of domain architecture, Peptidase A1 spans 89–392 (YAATITVGSN…DLDGNTISLA (304 aa)). Aspartate 107 is a catalytic residue. 107 to 109 (DTG) is a pepstatin A binding site. Cysteine 122 and cysteine 134 are joined by a disulfide. The active site involves aspartate 292. 292–296 (DSGTT) contributes to the pepstatin A binding site. Cysteine 327 and cysteine 358 are oxidised to a cystine.

Belongs to the peptidase A1 family. Monomer.

It localises to the secreted. The catalysed reaction is Preferential cleavage at the carboxyl of hydrophobic amino acids, but fails to cleave 15-Leu-|-Tyr-16, 16-Tyr-|-Leu-17 and 24-Phe-|-Phe-25 of insulin B chain. Activates trypsinogen, and degrades keratin.. Secreted aspartic peptidases (SAPs) are a group of ten acidic hydrolases considered as key virulence factors. These enzymes supply the fungus with nutrient amino acids as well as are able to degrade the selected host's proteins involved in the immune defense. Moreover, acts toward human hemoglobin though limited proteolysis to generate a variety of antimicrobial hemocidins, enabling to compete with the other microorganisms of the same physiological niche using the microbicidal peptides generated from the host protein. Functionally, plays a key role in defense against host by cleaving histatin-5 (Hst 5), a peptide from human saliva that carries out fungicidal activity. The cleavage rate decreases in an order of SAP2 &gt; SAP9 &gt; SAP3 &gt; SAP7 &gt; SAP4 &gt; SAP1 &gt; SAP8. The hydrolysis of Hst 5 by SAP8 causes production of the DSHAKRHHGY, HHSHRGY and FHEKHHSHRGY peptides. This is Secreted aspartic protease 8 from Candida albicans (Yeast).